Reading from the N-terminus, the 130-residue chain is Histone H2A type 1-K (130 aa).

Residues 1–22 (MSGRGKQGGKARAKAKTRSSRA) form a disordered region. The residue at position 2 (serine 2) is an N-acetylserine. Serine 2 carries the post-translational modification Phosphoserine; by RPS6KA5. Position 4 is a citrulline; alternate (arginine 4). Arginine 4 carries the post-translational modification Symmetric dimethylarginine; by PRMT5; alternate. 2 positions are modified to N6-(2-hydroxyisobutyryl)lysine; alternate: lysine 6 and lysine 10. Position 6 is an N6-(beta-hydroxybutyryl)lysine; alternate (lysine 6). N6-acetyllysine; alternate is present on residues lysine 6 and lysine 10. The segment covering 7 to 19 (QGGKARAKAKTRS) has biased composition (basic residues). Residue lysine 10 is modified to N6-lactoyllysine; alternate. Lysine 10 bears the N6-succinyllysine; alternate mark. Glycyl lysine isopeptide (Lys-Gly) (interchain with G-Cter in ubiquitin) cross-links involve residues lysine 14 and lysine 16. Lysine 37 carries the N6-(2-hydroxyisobutyryl)lysine; alternate modification. N6-(beta-hydroxybutyryl)lysine; alternate is present on lysine 37. Lysine 37 bears the N6-crotonyllysine; alternate mark. An N6-(2-hydroxyisobutyryl)lysine mark is found at lysine 75 and lysine 76. Lysine 96 is subject to N6-(2-hydroxyisobutyryl)lysine; alternate. Lysine 96 bears the N6-succinyllysine; alternate mark. N6-glutaryllysine; alternate is present on lysine 96. Glutamine 105 carries the post-translational modification N5-methylglutamine. N6-(2-hydroxyisobutyryl)lysine; alternate is present on lysine 119. 2 positions are modified to N6-crotonyllysine; alternate: lysine 119 and lysine 120. Residues lysine 119 and lysine 120 each carry the N6-glutaryllysine; alternate modification. Position 120 is an N6-(beta-hydroxybutyryl)lysine; alternate (lysine 120). Residue lysine 120 forms a Glycyl lysine isopeptide (Lys-Gly) (interchain with G-Cter in ubiquitin); alternate linkage. Threonine 121 carries the post-translational modification Phosphothreonine; by DCAF1. At lysine 126 the chain carries N6-(beta-hydroxybutyryl)lysine; alternate. Lysine 126 bears the N6-crotonyllysine; alternate mark. An N6-glutaryllysine; alternate modification is found at lysine 126.

This sequence belongs to the histone H2A family. As to quaternary structure, the nucleosome is a histone octamer containing two molecules each of H2A, H2B, H3 and H4 assembled in one H3-H4 heterotetramer and two H2A-H2B heterodimers. The octamer wraps approximately 147 bp of DNA. Post-translationally, deiminated on Arg-4 in granulocytes upon calcium entry. In terms of processing, monoubiquitination of Lys-120 (H2AK119Ub) by RING1, TRIM37 and RNF2/RING2 complex gives a specific tag for epigenetic transcriptional repression and participates in X chromosome inactivation of female mammals. It is involved in the initiation of both imprinted and random X inactivation. Ubiquitinated H2A is enriched in inactive X chromosome chromatin. Ubiquitination of H2A functions downstream of methylation of 'Lys-27' of histone H3 (H3K27me). H2AK119Ub by RNF2/RING2 can also be induced by ultraviolet and may be involved in DNA repair. Following DNA double-strand breaks (DSBs), it is ubiquitinated through 'Lys-63' linkage of ubiquitin moieties by the E2 ligase UBE2N and the E3 ligases RNF8 and RNF168, leading to the recruitment of repair proteins to sites of DNA damage. Ubiquitination at Lys-14 and Lys-16 (H2AK13Ub and H2AK15Ub, respectively) in response to DNA damage is initiated by RNF168 that mediates monoubiquitination at these 2 sites, and 'Lys-63'-linked ubiquitin are then conjugated to monoubiquitin; RNF8 is able to extend 'Lys-63'-linked ubiquitin chains in vitro. Deubiquitinated by USP51 at Lys-14 and Lys-16 (H2AK13Ub and H2AK15Ub, respectively) after damaged DNA is repaired. H2AK119Ub and ionizing radiation-induced 'Lys-63'-linked ubiquitination (H2AK13Ub and H2AK15Ub) are distinct events. Phosphorylation on Ser-2 (H2AS1ph) is enhanced during mitosis. Phosphorylation on Ser-2 by RPS6KA5/MSK1 directly represses transcription. Acetylation of H3 inhibits Ser-2 phosphorylation by RPS6KA5/MSK1. Phosphorylation at Thr-121 (H2AT120ph) by DCAF1 is present in the regulatory region of many tumor suppresor genes and down-regulates their transcription. Post-translationally, symmetric dimethylation on Arg-4 by the PRDM1/PRMT5 complex may play a crucial role in the germ-cell lineage. In terms of processing, glutamine methylation at Gln-105 (H2AQ104me) by FBL is specifically dedicated to polymerase I. It is present at 35S ribosomal DNA locus and impairs binding of the FACT complex. Crotonylation (Kcr) is specifically present in male germ cells and marks testis-specific genes in post-meiotic cells, including X-linked genes that escape sex chromosome inactivation in haploid cells. Crotonylation marks active promoters and enhancers and confers resistance to transcriptional repressors. It is also associated with post-meiotically activated genes on autosomes. Post-translationally, hydroxybutyrylation of histones is induced by starvation. In terms of processing, lactylated in macrophages by EP300/P300 by using lactoyl-CoA directly derived from endogenous or exogenous lactate, leading to stimulates gene transcription.

It is found in the nucleus. The protein localises to the chromosome. In terms of biological role, core component of nucleosome. Nucleosomes wrap and compact DNA into chromatin, limiting DNA accessibility to the cellular machineries which require DNA as a template. Histones thereby play a central role in transcription regulation, DNA repair, DNA replication and chromosomal stability. DNA accessibility is regulated via a complex set of post-translational modifications of histones, also called histone code, and nucleosome remodeling. This is Histone H2A type 1-K from Mus musculus (Mouse).